A 274-amino-acid polypeptide reads, in one-letter code: ATP synthase subunit a (274 aa).

5 consecutive transmembrane segments (helical) span residues 40-60, 110-130, 149-169, 224-244, and 245-265; these read FWVC…VILI, IFVW…LVPF, DVNI…FYSI, IFIL…SVPW, and AIFH…LTIV.

The protein belongs to the ATPase A chain family. As to quaternary structure, F-type ATPases have 2 components, CF(1) - the catalytic core - and CF(0) - the membrane proton channel. CF(1) has five subunits: alpha(3), beta(3), gamma(1), delta(1), epsilon(1). CF(0) has three main subunits: a(1), b(2) and c(9-12). The alpha and beta chains form an alternating ring which encloses part of the gamma chain. CF(1) is attached to CF(0) by a central stalk formed by the gamma and epsilon chains, while a peripheral stalk is formed by the delta and b chains.

Its subcellular location is the cell membrane. Key component of the proton channel; it plays a direct role in the translocation of protons across the membrane. In Buchnera aphidicola subsp. Baizongia pistaciae (strain Bp), this protein is ATP synthase subunit a.